The chain runs to 330 residues: Aspartate--ammonia ligase (330 aa).

Belongs to the class-II aminoacyl-tRNA synthetase family. AsnA subfamily.

It is found in the cytoplasm. It carries out the reaction L-aspartate + NH4(+) + ATP = L-asparagine + AMP + diphosphate + H(+). It participates in amino-acid biosynthesis; L-asparagine biosynthesis; L-asparagine from L-aspartate (ammonia route): step 1/1. The chain is Aspartate--ammonia ligase from Escherichia coli O8 (strain IAI1).